We begin with the raw amino-acid sequence, 565 residues long: NAD-dependent malic enzyme (565 aa).

Tyr104 serves as the catalytic Proton donor. An NAD(+)-binding site is contributed by Arg157. Catalysis depends on Lys175, which acts as the Proton acceptor. A divalent metal cation-binding residues include Glu246, Asp247, and Asp270. Positions 270 and 418 each coordinate NAD(+).

This sequence belongs to the malic enzymes family. In terms of assembly, homotetramer. Requires Mg(2+) as cofactor. It depends on Mn(2+) as a cofactor.

The catalysed reaction is (S)-malate + NAD(+) = pyruvate + CO2 + NADH. It carries out the reaction oxaloacetate + H(+) = pyruvate + CO2. This Yersinia enterocolitica serotype O:8 / biotype 1B (strain NCTC 13174 / 8081) protein is NAD-dependent malic enzyme.